The chain runs to 265 residues: 2-amino-3,7-dideoxy-D-threo-hept-6-ulosonate synthase (265 aa).

Aspartate 25 serves as the catalytic Proton acceptor. 1-deoxy-D-threo-hexo-2,5-diulose 6-phosphate contacts are provided by residues 25 to 29 (DHGIT) and 144 to 146 (YAR). Tyrosine 144 functions as the Proton donor in the catalytic mechanism. Catalysis depends on lysine 174, which acts as the Schiff-base intermediate with substrate. Residues 199 to 200 (GG) and 226 to 227 (GR) contribute to the 1-deoxy-D-threo-hexo-2,5-diulose 6-phosphate site.

It belongs to the DeoC/FbaB aldolase family. ADHS subfamily. As to quaternary structure, homodecamer.

It catalyses the reaction 1-deoxy-D-threo-hexo-2,5-diulose 6-phosphate + L-aspartate 4-semialdehyde = 2,3-dioxopropyl phosphate + 2-amino-2,3,7-trideoxy-D-lyxo-hept-6-ulosonate. Its function is as follows. Catalyzes a transaldol reaction between 6-deoxy-5-ketofructose 1-phosphate (DKFP) and L-aspartate semialdehyde (ASA) with an elimination of hydroxypyruvaldehyde phosphate to yield 2-amino-3,7-dideoxy-D-threo-hept-6-ulosonate (ADH). Plays a key role in an alternative pathway of the biosynthesis of 3-dehydroquinate (DHQ), which is involved in the canonical pathway for the biosynthesis of aromatic amino acids. The protein is 2-amino-3,7-dideoxy-D-threo-hept-6-ulosonate synthase of Halobacterium salinarum (strain ATCC 700922 / JCM 11081 / NRC-1) (Halobacterium halobium).